A 118-amino-acid chain; its full sequence is ATP synthase subunit g, mitochondrial (118 aa).

This sequence belongs to the ATPase g subunit family. In terms of assembly, F-type ATPases have 2 components, CF(1) - the catalytic core - and CF(0) - the membrane proton channel.

Its subcellular location is the mitochondrion membrane. Its function is as follows. Mitochondrial membrane ATP synthase (F(1)F(0) ATP synthase or Complex V) produces ATP from ADP in the presence of a proton gradient across the membrane which is generated by electron transport complexes of the respiratory chain. F-type ATPases consist of two structural domains, F(1) - containing the extramembraneous catalytic core, and F(0) - containing the membrane proton channel, linked together by a central stalk and a peripheral stalk. During catalysis, ATP synthesis in the catalytic domain of F(1) is coupled via a rotary mechanism of the central stalk subunits to proton translocation. Part of the complex F(0) domain. Minor subunit located with subunit a in the membrane. In Schizosaccharomyces pombe (strain 972 / ATCC 24843) (Fission yeast), this protein is ATP synthase subunit g, mitochondrial (atp20).